We begin with the raw amino-acid sequence, 553 residues long: Hydroxylamine reductase (553 aa).

The [4Fe-4S] cluster site is built by Cys-3, Cys-6, Cys-15, and Cys-21. The hybrid [4Fe-2O-2S] cluster site is built by His-244, Glu-268, Cys-312, Cys-406, Cys-434, Cys-459, Glu-494, and Lys-496. At Cys-406 the chain carries Cysteine persulfide.

It belongs to the HCP family. As to quaternary structure, monomer. The cofactor is [4Fe-4S] cluster. It depends on hybrid [4Fe-2O-2S] cluster as a cofactor.

It localises to the cytoplasm. The catalysed reaction is A + NH4(+) + H2O = hydroxylamine + AH2 + H(+). In terms of biological role, catalyzes the reduction of hydroxylamine to form NH(3) and H(2)O. This Nitratidesulfovibrio vulgaris (strain ATCC 29579 / DSM 644 / CCUG 34227 / NCIMB 8303 / VKM B-1760 / Hildenborough) (Desulfovibrio vulgaris) protein is Hydroxylamine reductase.